An 812-amino-acid chain; its full sequence is Ribonucleoside-diphosphate reductase large subunit (812 aa).

The ATP-cone domain maps to 12–103 (LYVIKRDGRQ…VSNLHKETKK (92 aa)). ATP is bound by residues 16-17 (KR), 22-28 (EEVHFDK), Thr64, and Asp68. The GDP site is built by Ser213 and Ser228. The cysteines at positions 229 and 455 are disulfide-linked. DTTP is bound by residues 237–239 (DSI), Lys254, Arg267, and 274–275 (CG). Residue Asn438 participates in GDP binding. The Proton acceptor role is filled by Asn438. Residue Cys440 is the Cysteine radical intermediate of the active site. Residues Glu442 and 615–618 (TAST) contribute to the GDP site. Glu442 functions as the Proton acceptor in the catalytic mechanism. The residue at position 778 (Thr778) is a Phosphothreonine. At Ser782 the chain carries Phosphoserine. Tyr786 carries the post-translational modification Phosphotyrosine.

Belongs to the ribonucleoside diphosphate reductase large chain family. As to quaternary structure, heterodimer of a large and a small subunit.

It carries out the reaction a 2'-deoxyribonucleoside 5'-diphosphate + [thioredoxin]-disulfide + H2O = a ribonucleoside 5'-diphosphate + [thioredoxin]-dithiol. Under complex allosteric control mediated by deoxynucleoside triphosphates and ATP binding to separate specificity and activation sites on the M1 subunit. The type of nucleotide bound at the specificity site determines substrate preference. It seems probable that ATP makes the enzyme reduce CDP and UDP, dGTP favors ADP reduction and dTTP favors GDP reduction. Stimulated by ATP and inhibited by dATP binding to the activity site. In terms of biological role, provides the precursors necessary for DNA synthesis. Catalyzes the biosynthesis of deoxyribonucleotides from the corresponding ribonucleotides. This Drosophila melanogaster (Fruit fly) protein is Ribonucleoside-diphosphate reductase large subunit (RnrL).